Consider the following 144-residue polypeptide: UPF0102 protein BTH_I3148 (144 aa).

The interval Met1 to Asp20 is disordered.

Belongs to the UPF0102 family.

The sequence is that of UPF0102 protein BTH_I3148 from Burkholderia thailandensis (strain ATCC 700388 / DSM 13276 / CCUG 48851 / CIP 106301 / E264).